The sequence spans 525 residues: MSNPRMFQSRGKRVVSDSLPIANSTHTLEDTLKLRPDWTIALSQHETETRSTRTSCSTTTESTIAMRSKQKAIISVLEEFRDSEAAYVHDLHVAQRYYADRLSDRVKKSEWKDVFEIFLVLCKQASLFEIEMHKSLNDEINYILDDQDACLKPKPSVAQLFLSWLPKLSAVYGRYCVIQENIGKKVEKWMKNSSISEYLQECDSMAKIESNSWNLDSFLVKPVQRFLKYPLLLNQLYRSASLGIISDYVLLGEACHKSEIASQRMNELKRRRDIIITALDSVSNSQEVLLLSTDSIDKKIAKLQNSTNIFYVPEHEPILAFVHQLSSSYTNLLNLRSAICDWLKFSRYHYLKFFTFVEAYSVFCKDTKSADKWALISVALDNIAKGAVLRLTEQCQTSVLRPISNGILFFRNPLCVTDVWIKKATAFSKRRQSQVFEEDLESFPLLSNCLLEELPLFLEMARNVTDECILAFAQIQATFYDTIQKVLEPVVAKFNLTDHQDIPSIESIMDFTSLRSSMESSPKSK.

Residues 72–268 (AIISVLEEFR…EIASQRMNEL (197 aa)) enclose the DH domain.

It localises to the cytoplasm. Has a role in the control of cell polarity and cytokinesis. Involved in bipolar growth and septum formation. The polypeptide is Rho guanine nucleotide exchange factor gef3 (gef3) (Schizosaccharomyces pombe (strain 972 / ATCC 24843) (Fission yeast)).